The primary structure comprises 686 residues: MSGSKLSTPNNSGGGQGNLSQEQIITGTREVIKGLEQLKNEHNDILNSLYQSLKMLKKDTPGDSNLVEEKTDIIEKSLESLELGLGEAKVMMALGHHLNMVEAEKQKLRAQVRRLVQENTWLRDELAATQQKLQTSEQNLADLEVKYKHLEYMNSIKKYDEDRTPDEEASSSDPLDLGFPEDDDGGQADESYPQPQTGSGSVSAAAGGYEIPARLRTLHNLVIQYASQSRYEVAVPLCKQALEDLEKTSGHDHPDVATMLNILALVYRDQNKYKEAGNLLHDALAIREKTLGPDHPAVAATLNNLAVLYGKRGKYKEAEPLCKRALEIREKVLGKDHPDVAKQLNNLALLCQNQGKYEEVEWYYQRALEIYEKKLGPDDPNVAKTKNNLAAAYLKQGKYKAAETLYKQVLTRAHEREFGLSADDKDNKPIWMQAEEREEKGKFKDNAPYGDYGGWHKAAKVDSRSRSSPTVTTTLKNLGALYRRQGKYDAAEILEECAMKSRRNALDMVRETKVRELLGQDLSTDVPRSEAMAKERHHRRSSGTPRHGSTESVSYEKTDGSEEVSIGVAWKAKRKAKDRSRSIPAGYVEIPRSPPHVLVENGDGKLRRSGSLSKLRASVRRSSTKLLNKLKGRESDDDGGMKRASSMSVLPSRGNDESTPAPIQLSQRGRVGSHDNLSSRRQSGNF.

2 disordered regions span residues 1–23 (MSGS…SQEQ) and 158–204 (KYDE…SVSA). A coiled-coil region spans residues 20–160 (SQEQIITGTR…EYMNSIKKYD (141 aa)). 6 TPR repeats span residues 215–248 (LRTL…LEKT), 257–290 (ATML…REKT), 299–332 (AATL…REKV), 341–374 (AKQL…YEKK), 383–416 (AKTK…AHER), and 472–505 (TTTL…RRNA). 2 disordered regions span residues 520-558 (QDLS…YEKT) and 586-686 (GYVE…SGNF). Residues 675-686 (DNLSSRRQSGNF) are compositionally biased toward polar residues.

Belongs to the kinesin light chain family. As to quaternary structure, oligomeric complex composed of two heavy chains and two light chains. Post-translationally, phosphorylation may modulate the process of mechanochemical coupling.

Its subcellular location is the cytoplasm. The protein resides in the cytoskeleton. Its function is as follows. Kinesin is a microtubule-associated force-producing protein that may play a role in organelle transport. The light chain may function in coupling of cargo to the heavy chain or in the modulation of its ATPase activity. The polypeptide is Kinesin light chain (Strongylocentrotus purpuratus (Purple sea urchin)).